The following is a 165-amino-acid chain: Nucleotide-binding protein Ccon26_01810 (165 aa).

The protein belongs to the YajQ family.

Functionally, nucleotide-binding protein. The sequence is that of Nucleotide-binding protein Ccon26_01810 from Campylobacter concisus (strain 13826).